The primary structure comprises 421 residues: tRNA (guanine(37)-N(1))-methyltransferase (421 aa).

S-adenosyl-L-methionine contacts are provided by residues Arg198, 242–243, 270–271, and Asn293; these read DL and DA.

Belongs to the class I-like SAM-binding methyltransferase superfamily. TRM5/TYW2 family. Monomer.

It is found in the mitochondrion matrix. Its subcellular location is the nucleus. It localises to the cytoplasm. It carries out the reaction guanosine(37) in tRNA + S-adenosyl-L-methionine = N(1)-methylguanosine(37) in tRNA + S-adenosyl-L-homocysteine + H(+). In terms of biological role, specifically methylates the N1 position of guanosine-37 in various cytoplasmic and mitochondrial tRNAs. Methylation is not dependent on the nature of the nucleoside 5' of the target nucleoside. This is the first step in the biosynthesis of wybutosine (yW), a modified base adjacent to the anticodon of tRNAs and required for accurate decoding. This Paramecium tetraurelia protein is tRNA (guanine(37)-N(1))-methyltransferase.